The chain runs to 288 residues: tRNA pseudouridine synthase B (288 aa).

Asp38 acts as the Nucleophile in catalysis.

The protein belongs to the pseudouridine synthase TruB family. Type 1 subfamily.

The enzyme catalyses uridine(55) in tRNA = pseudouridine(55) in tRNA. In terms of biological role, responsible for synthesis of pseudouridine from uracil-55 in the psi GC loop of transfer RNAs. The protein is tRNA pseudouridine synthase B of Carboxydothermus hydrogenoformans (strain ATCC BAA-161 / DSM 6008 / Z-2901).